The sequence spans 515 residues: uncharacterized protein (515 aa).

3 disordered regions span residues 117–188 (DNIL…RKSQ), 362–453 (RSTS…AESM), and 496–515 (GNAV…DYFN). Composition is skewed to basic and acidic residues over residues 370–380 (KNVESETKQEE), 388–402 (PAED…EVIE), and 428–438 (PIKEIEDKVEP). Positions 502–515 (ADTESMDDFMDYFN) are enriched in acidic residues.

This is an uncharacterized protein from Ostreid herpesvirus 1 (isolate France) (OsHV-1).